We begin with the raw amino-acid sequence, 225 residues long: Uracil-DNA glycosylase (225 aa).

Asp68 acts as the Proton acceptor in catalysis.

This sequence belongs to the uracil-DNA glycosylase (UDG) superfamily. UNG family.

The protein resides in the cytoplasm. It catalyses the reaction Hydrolyzes single-stranded DNA or mismatched double-stranded DNA and polynucleotides, releasing free uracil.. Functionally, excises uracil residues from the DNA which can arise as a result of misincorporation of dUMP residues by DNA polymerase or due to deamination of cytosine. This chain is Uracil-DNA glycosylase, found in Mycolicibacterium gilvum (strain PYR-GCK) (Mycobacterium gilvum (strain PYR-GCK)).